A 365-amino-acid chain; its full sequence is 3-dehydroquinate synthase (365 aa).

Residues 106-110 (GVIGD), 130-131 (TT), lysine 142, lysine 151, and 169-172 (FFAT) contribute to the NAD(+) site. Zn(2+) is bound by residues glutamate 184, histidine 247, and histidine 264.

The protein belongs to the sugar phosphate cyclases superfamily. Dehydroquinate synthase family. The cofactor is NAD(+). It depends on Co(2+) as a cofactor. Zn(2+) serves as cofactor.

The protein localises to the cytoplasm. The enzyme catalyses 7-phospho-2-dehydro-3-deoxy-D-arabino-heptonate = 3-dehydroquinate + phosphate. It functions in the pathway metabolic intermediate biosynthesis; chorismate biosynthesis; chorismate from D-erythrose 4-phosphate and phosphoenolpyruvate: step 2/7. In terms of biological role, catalyzes the conversion of 3-deoxy-D-arabino-heptulosonate 7-phosphate (DAHP) to dehydroquinate (DHQ). The polypeptide is 3-dehydroquinate synthase (Listeria monocytogenes serotype 4b (strain F2365)).